The primary structure comprises 482 residues: uncharacterized protein (482 aa).

The HTH gntR-type domain maps to 12–80; the sequence is LPKYRQIVHF…MGKGTVVINN (69 aa). The H-T-H motif DNA-binding region spans 40 to 59; the sequence is QRTLAKDFQVNRSTVITALE. Lys325 carries the post-translational modification N6-(pyridoxal phosphate)lysine.

This sequence in the C-terminal section; belongs to the class-I pyridoxal-phosphate-dependent aminotransferase family. Pyridoxal 5'-phosphate is required as a cofactor.

This is an uncharacterized protein from Bacillus subtilis (strain 168).